The primary structure comprises 431 residues: Serine hydroxymethyltransferase 3 (431 aa).

(6S)-5,6,7,8-tetrahydrofolate is bound by residues Leu-131 and 135 to 137 (GHL). Lys-240 carries the N6-(pyridoxal phosphate)lysine modification.

It belongs to the SHMT family. Homodimer. Pyridoxal 5'-phosphate serves as cofactor.

It is found in the cytoplasm. The catalysed reaction is (6R)-5,10-methylene-5,6,7,8-tetrahydrofolate + glycine + H2O = (6S)-5,6,7,8-tetrahydrofolate + L-serine. It participates in one-carbon metabolism; tetrahydrofolate interconversion. It functions in the pathway amino-acid biosynthesis; glycine biosynthesis; glycine from L-serine: step 1/1. Its function is as follows. Catalyzes the reversible interconversion of serine and glycine with tetrahydrofolate (THF) serving as the one-carbon carrier. This reaction serves as the major source of one-carbon groups required for the biosynthesis of purines, thymidylate, methionine, and other important biomolecules. Also exhibits THF-independent aldolase activity toward beta-hydroxyamino acids, producing glycine and aldehydes, via a retro-aldol mechanism. The sequence is that of Serine hydroxymethyltransferase 3 from Colwellia psychrerythraea (strain 34H / ATCC BAA-681) (Vibrio psychroerythus).